We begin with the raw amino-acid sequence, 1376 residues long: YLP motif-containing protein 1 (1376 aa).

2 disordered regions span residues 1-335 (MYPN…PEED) and 511-1058 (STIP…PPGR). The segment covering 14–27 (YPPPPVPPPPPPVA) has biased composition (pro residues). Low complexity-rich tracts occupy residues 31 to 50 (ASPGPGYSSSTAPAAPSSSG) and 59 to 80 (LAQLQQLQQMHQKQMQCVLQPH). Composition is skewed to pro residues over residues 81–93 (HLPPPPLPPPPVM), 102–114 (QPPPPPMPPPPGP), 148–158 (PESPPVPPGSY), 166–176 (MPPPQPPPSYY), and 184–204 (YLPPAQPSPSKPQLPPPPPSI). Polar residues-rich tracts occupy residues 207–216 (GNKTTIQQEP) and 238–260 (STMTPQEQQQYWYRQHLLSLQQR). Basic residues predominate over residues 261–271 (TKVHLPGHKKG). Positions 277–286 (DVPEPIKEEA) are enriched in basic and acidic residues. Composition is skewed to pro residues over residues 303–320 (PPLPPPNEEMPPPLPPEE), 511–537 (STIPPPGMPPPVMPPSLPTSVPPPGMP), 545–594 (LPPP…PQGM), and 632–641 (PPSPYHPPPQ). Positions 642 to 671 (SEQGNSKPLNKVFSSEQGLGESSSALSQSV) are enriched in polar residues. K675 carries the N6-methyllysine modification. A compositionally biased stretch (basic and acidic residues) spans 698–714 (RGPREQKEQLQKLKDFG). Pro residues-rich tracts occupy residues 738 to 753 (MYPPPGSYRPPPPMGK), 773 to 796 (TRPPVPIPPPPPPPPPPPPPPPVI), and 840 to 870 (PVLPPPPVHPSIPPPGPMPMGMPPMSKPPPV). K886 participates in a covalent cross-link: Glycyl lysine isopeptide (Lys-Gly) (interchain with G-Cter in SUMO2). Composition is skewed to basic and acidic residues over residues 896–930 (ITLRPDPLPERSAFDADHAGQRDRYDRDRDREPYF), 937–1004 (TDHR…DRPP), 1013–1023 (GERRTYPEERM), and 1039–1058 (RVEKKPESKNVDDILKPPGR). K943 is covalently cross-linked (Glycyl lysine isopeptide (Lys-Gly) (interchain with G-Cter in SUMO2)). Residues 1326–1333 (KKRVRWAD) are involved in interaction with PPP1CA.

Interacts with PPP1CA and NCOA5. Forms a complex with ILF2, ILF3, KHDRBS1, RBMX, NCOA5 and PPP1CA. High level expression seen in the brain, adipose tissue, heart and kidney, with a low level expression in muscle, spleen and lung (at protein level).

It is found in the nucleus. The protein resides in the nucleus speckle. Functionally, plays a role in the reduction of telomerase activity during differentiation of embryonic stem cells by binding to the core promoter of TERT and controlling its down-regulation. The protein is YLP motif-containing protein 1 (Ylpm1) of Rattus norvegicus (Rat).